We begin with the raw amino-acid sequence, 724 residues long: Tripartite terminase subunit 1 (724 aa).

Residues 175–203 form a C3H1-type zinc finger; it reads CAVCFEELCVTANQGEATHRRLLGCVCDH. Residues 410–445 form a disordered region; the sequence is GGDDADADGGAAGGADAGDGGVGDEDGPGAPPPADA. Gly residues predominate over residues 419–430; that stretch reads GAAGGADAGDGG. 652–659 contributes to the ATP binding site; it reads FRSVFHCG.

Belongs to the herpesviridae TRM1 protein family. Associates with TRM2 and TRM3 to form the tripartite terminase complex. Interacts with portal protein.

It localises to the host nucleus. Functionally, component of the molecular motor that translocates viral genomic DNA in empty capsid during DNA packaging. Forms a tripartite terminase complex together with TRM2 and TRM3 in the host cytoplasm. Once the complex reaches the host nucleus, it interacts with the capsid portal vertex. This portal forms a ring in which genomic DNA is translocated into the capsid. TRM1 carries an endonuclease activity that plays an important role for the cleavage of concatemeric viral DNA into unit length genomes. The sequence is that of Tripartite terminase subunit 1 from Suid herpesvirus 1 (strain Indiana-Funkhauser / Becker) (SuHV-1).